The following is a 72-amino-acid chain: Translation initiation factor IF-1 (72 aa).

One can recognise an S1-like domain in the interval 1–72; the sequence is MAKQDVIELE…SRGRITYRYK (72 aa).

This sequence belongs to the IF-1 family. As to quaternary structure, component of the 30S ribosomal translation pre-initiation complex which assembles on the 30S ribosome in the order IF-2 and IF-3, IF-1 and N-formylmethionyl-tRNA(fMet); mRNA recruitment can occur at any time during PIC assembly.

It localises to the cytoplasm. One of the essential components for the initiation of protein synthesis. Stabilizes the binding of IF-2 and IF-3 on the 30S subunit to which N-formylmethionyl-tRNA(fMet) subsequently binds. Helps modulate mRNA selection, yielding the 30S pre-initiation complex (PIC). Upon addition of the 50S ribosomal subunit IF-1, IF-2 and IF-3 are released leaving the mature 70S translation initiation complex. The chain is Translation initiation factor IF-1 from Staphylococcus epidermidis (strain ATCC 35984 / DSM 28319 / BCRC 17069 / CCUG 31568 / BM 3577 / RP62A).